The primary structure comprises 577 residues: Moesin (577 aa).

Positions 2-295 (PKTINVRVTT…GNHELYMRRR (294 aa)) constitute an FERM domain. Ser74 carries the post-translational modification Phosphoserine. Lys79 is modified (N6-acetyllysine). Lys83 is subject to N6-succinyllysine. The [IL]-x-C-x-x-[DE] motif signature appears at 115–120 (IYCPPE). Position 116 is a phosphotyrosine (Tyr116). The residue at position 117 (Cys117) is an S-nitrosocysteine. N6-acetyllysine occurs at positions 139 and 165. The segment covering 376–414 (EQERKRAQSEAEKLAKERQEAEEAKEALLKASRDQKKTQ) has biased composition (basic and acidic residues). 2 disordered regions span residues 376 to 415 (EQER…KTQE) and 434 to 518 (ARQK…NERV). Residue Ser407 is modified to Phosphoserine. Residues 476–487 (AENDQDEQDENG) show a composition bias toward acidic residues. Positions 492-518 (ADLRADAMAKDRSEEERTTEAEKNERV) are enriched in basic and acidic residues. The residue at position 527 (Ser527) is a Phosphoserine. Thr558 is subject to Phosphothreonine; by ROCK2 and STK10.

Binds NHERF1. In resting T-cells, part of a PAG1-NHERF1-MSN complex which is disrupted upon TCR activation. Interacts with PPP1R16B. Interacts with PDZD8. Interacts with SELPLG and SYK; mediates the activation of SYK by SELPLG. Interacts with PDPN (via cytoplasmic domain); activates RHOA and promotes epithelial-mesenchymal transition. Interacts with SPN/CD43 cytoplasmic tail, CD44 and ICAM2. Post-translationally, phosphorylation on Thr-558 is crucial for the formation of microvilli-like structures. Phosphorylation by ROCK2 suppresses the head-to-tail association of the N-terminal and C-terminal halves resulting in an opened conformation which is capable of actin and membrane-binding. Phosphorylation on Thr-558 by STK10 negatively regulates lymphocyte migration and polarization. S-nitrosylation of Cys-117 is induced by interferon-gamma and oxidatively-modified low-densitity lipoprotein (LDL(ox)) implicating the iNOS-S100A8/9 transnitrosylase complex.

It is found in the cell membrane. Its subcellular location is the cytoplasm. The protein resides in the cytoskeleton. It localises to the apical cell membrane. The protein localises to the cell projection. It is found in the microvillus membrane. Its subcellular location is the microvillus. With respect to regulation, a head-to-tail association, of the N-terminal and C-terminal halves results in a closed conformation (inactive form) which is incapable of actin or membrane-binding. Its function is as follows. Probably involved in connections of major cytoskeletal structures to the plasma membrane. Plays a role in regulating the proliferation, migration, and adhesion of human lymphoid cells and participates in immunologic synapse formation. This is Moesin from Sus scrofa (Pig).